A 373-amino-acid polypeptide reads, in one-letter code: Flagellar P-ring protein (373 aa).

A signal peptide spans 1–28; the sequence is MPRVSTHLVKLAAAALCALLLSAVAASA.

This sequence belongs to the FlgI family. As to quaternary structure, the basal body constitutes a major portion of the flagellar organelle and consists of four rings (L,P,S, and M) mounted on a central rod.

It localises to the periplasm. Its subcellular location is the bacterial flagellum basal body. Assembles around the rod to form the L-ring and probably protects the motor/basal body from shearing forces during rotation. This is Flagellar P-ring protein from Rhodopseudomonas palustris (strain ATCC BAA-98 / CGA009).